A 967-amino-acid chain; its full sequence is Vitamin B12-dependent ribonucleotide reductase (967 aa).

The segment at 1–23 is disordered; it reads MTETASGPARSSRAKGTKAGKGL. Residues Ser143, 159–160, Gly188, 364–368, and 554–558 contribute to the substrate site; these read AC, NPCSE, and PTGTI. Residues Cys160 and Cys377 are joined by a disulfide bond. Asn364 acts as the Proton acceptor in catalysis. Cys366 functions as the Cysteine radical intermediate in the catalytic mechanism. Residue Glu368 is the Proton acceptor of the active site.

It belongs to the ribonucleoside diphosphate reductase class-2 family. Adenosylcob(III)alamin serves as cofactor.

The catalysed reaction is a 2'-deoxyribonucleoside 5'-diphosphate + [thioredoxin]-disulfide + H2O = a ribonucleoside 5'-diphosphate + [thioredoxin]-dithiol. Functionally, catalyzes the reduction of ribonucleotides to deoxyribonucleotides. May function to provide a pool of deoxyribonucleotide precursors for DNA repair during oxygen limitation and/or for immediate growth after restoration of oxygen. The polypeptide is Vitamin B12-dependent ribonucleotide reductase (nrdJ) (Streptomyces coelicolor (strain ATCC BAA-471 / A3(2) / M145)).